A 125-amino-acid polypeptide reads, in one-letter code: Small ribosomal subunit protein uS13 (125 aa).

Residues 92–125 are disordered; that stretch reads RRHLPVHGQRTKTNARTRKGPKKTVAGKKKAGKK.

This sequence belongs to the universal ribosomal protein uS13 family. Part of the 30S ribosomal subunit. Forms a loose heterodimer with protein S19. Forms two bridges to the 50S subunit in the 70S ribosome.

Its function is as follows. Located at the top of the head of the 30S subunit, it contacts several helices of the 16S rRNA. In the 70S ribosome it contacts the 23S rRNA (bridge B1a) and protein L5 of the 50S subunit (bridge B1b), connecting the 2 subunits; these bridges are implicated in subunit movement. Contacts the tRNAs in the A and P-sites. This is Small ribosomal subunit protein uS13 from Saccharopolyspora erythraea (strain ATCC 11635 / DSM 40517 / JCM 4748 / NBRC 13426 / NCIMB 8594 / NRRL 2338).